Here is a 625-residue protein sequence, read N- to C-terminus: Autophagy-related protein 13b (625 aa).

Low complexity-rich tracts occupy residues 322 to 332 (PSVSCSPSPTR) and 455 to 477 (PSGVRPSSSSSPRISFSRSSSRS). Disordered regions lie at residues 322 to 388 (PSVS…AVPR), 452 to 527 (FRRP…YPKK), and 544 to 564 (PPLRQDVSESSRPEICSNNNK). Over residues 498-518 (ITDRNSRPGSFDHRGDIHEPF) the composition is skewed to basic and acidic residues.

The protein belongs to the ATG13 family. Plant subfamily.

The protein resides in the cytoplasmic vesicle. The protein localises to the autophagosome. In terms of biological role, involved in autophagy in a nutritional condition dependent manner. The ATG1-ATG13 protein kinase complex regulates downstream events required for autophagosome enclosure and/or vacuolar delivery. Becomes a target of autophagy under nutrient starvation. Connects autophagy to plant nutritional status. The chain is Autophagy-related protein 13b from Arabidopsis thaliana (Mouse-ear cress).